A 459-amino-acid polypeptide reads, in one-letter code: DnaJ homolog subfamily A member 1 homolog (459 aa).

Positions 6 to 73 constitute a J domain; the sequence is EYYERLGVKP…EKRKMYDSYG (68 aa). The CR-type zinc finger occupies 158-243; sequence GKLVKISISR…CKGKRVIQGK (86 aa). Zn(2+)-binding residues include C171, C174, C188, C191, C215, C218, C231, and C234. CXXCXGXG motif repeat units lie at residues 171–178, 188–195, 215–222, and 231–238; these read CKTCKGSG, CPTCNGSR, CHTCHGTG, and CKECKGKR. Residues 405–459 form a disordered region; sequence NTNEQSSHGGAGGAYQQHGGAYGHQKQQQQGFNPADFGAQFGGGGPQQAQQCQQQ. The segment covering 418–435 has biased composition (low complexity); it reads AYQQHGGAYGHQKQQQQG. At C456 the chain carries Cysteine methyl ester. A lipid anchor (S-farnesyl cysteine) is attached at C456. A propeptide spans 457–459 (removed in mature form); sequence QQQ.

The protein resides in the membrane. It is found in the cytoplasm. The protein localises to the microsome. It localises to the mitochondrion. Its subcellular location is the nucleus. The protein resides in the perinuclear region. Its function is as follows. Co-chaperone for Hsp70 family members. Plays a role in protein transport into mitochondria and in the regulation of apoptosis via its role as co-chaperone. This chain is DnaJ homolog subfamily A member 1 homolog (dnaja1), found in Dictyostelium discoideum (Social amoeba).